Reading from the N-terminus, the 820-residue chain is Quinate repressor protein (820 aa).

The tract at residues Ser25–Leu79 is disordered. A compositionally biased stretch (low complexity) spans His59 to Ser71.

In the N-terminal section; belongs to the shikimate kinase family. The protein in the 2nd section; belongs to the type-I 3-dehydroquinase family. This sequence in the C-terminal section; belongs to the shikimate dehydrogenase family. In terms of assembly, interacts with qutA; transcriptional activator of the quinate utilization pathway genes.

Functionally, multi-domain repressor protein that negatively regulates transcription of the quinate utilization pathway genes. May mediate its repressor activity by binding directly to the qutA activator protein. The sequence is that of Quinate repressor protein (qutR) from Talaromyces stipitatus (strain ATCC 10500 / CBS 375.48 / QM 6759 / NRRL 1006) (Penicillium stipitatum).